Reading from the N-terminus, the 250-residue chain is 1-(5-phosphoribosyl)-5-[(5-phosphoribosylamino)methylideneamino] imidazole-4-carboxamide isomerase (250 aa).

Asp8 serves as the catalytic Proton acceptor. The active-site Proton donor is the Asp131.

It belongs to the HisA/HisF family.

It localises to the cytoplasm. It catalyses the reaction 1-(5-phospho-beta-D-ribosyl)-5-[(5-phospho-beta-D-ribosylamino)methylideneamino]imidazole-4-carboxamide = 5-[(5-phospho-1-deoxy-D-ribulos-1-ylimino)methylamino]-1-(5-phospho-beta-D-ribosyl)imidazole-4-carboxamide. Its pathway is amino-acid biosynthesis; L-histidine biosynthesis; L-histidine from 5-phospho-alpha-D-ribose 1-diphosphate: step 4/9. The sequence is that of 1-(5-phosphoribosyl)-5-[(5-phosphoribosylamino)methylideneamino] imidazole-4-carboxamide isomerase from Paraburkholderia phymatum (strain DSM 17167 / CIP 108236 / LMG 21445 / STM815) (Burkholderia phymatum).